The chain runs to 375 residues: Killer cell immunoglobulin-like receptor 2DL5A (375 aa).

The first 21 residues, 1-21, serve as a signal peptide directing secretion; it reads MSLMVISMACVGFFLLQGAWT. The Extracellular portion of the chain corresponds to 22-238; sequence HEGGQDKPLL…PSSKTGIRRH (217 aa). 2 consecutive Ig-like C2-type domains span residues 42–102 and 137–200; these read GGHV…HPRS and GENV…LHDS. Cysteines 49 and 95 form a disulfide. Residues N139, N173, and N218 are each glycosylated (N-linked (GlcNAc...) asparagine). C144 and C193 are oxidised to a cystine. The tract at residues 213 to 233 is disordered; the sequence is VSVTGNSSSSSSSPTEPSSKT. The span at 219–231 shows a compositional bias: low complexity; that stretch reads SSSSSSSPTEPSS. A helical transmembrane segment spans residues 239-259; the sequence is LHILIGTSVAIILFIILFFFL. Residues 260–375 are Cytoplasmic-facing; it reads LHCCCSNKKN…ASSHVPAAGI (116 aa). A disordered region spans residues 334–375; it reads AKPRSLSPAHKHHSQALRGSSRETTALSQNRVASSHVPAAGI. Over residues 355–366 the composition is skewed to polar residues; sequence RETTALSQNRVA.

It belongs to the immunoglobulin superfamily.

The protein localises to the cell membrane. In terms of biological role, receptor on natural killer (NK) cells for HLA-C alleles. Inhibits the activity of NK cells thus preventing cell lysis. The sequence is that of Killer cell immunoglobulin-like receptor 2DL5A (KIR2DL5A) from Homo sapiens (Human).